A 320-amino-acid polypeptide reads, in one-letter code: Undecaprenyl-diphosphatase (320 aa).

8 consecutive transmembrane segments (helical) span residues Phe-9–Phe-29, Gly-82–Trp-102, Leu-130–Ile-150, Leu-161–Leu-181, Leu-191–Val-211, Phe-236–Ala-256, Leu-265–Leu-285, and Val-296–Ile-316.

Belongs to the UppP family.

It localises to the cell inner membrane. The catalysed reaction is di-trans,octa-cis-undecaprenyl diphosphate + H2O = di-trans,octa-cis-undecaprenyl phosphate + phosphate + H(+). Catalyzes the dephosphorylation of undecaprenyl diphosphate (UPP). Confers resistance to bacitracin. This Trichormus variabilis (strain ATCC 29413 / PCC 7937) (Anabaena variabilis) protein is Undecaprenyl-diphosphatase.